A 264-amino-acid polypeptide reads, in one-letter code: 2-C-methyl-D-erythritol 4-phosphate cytidylyltransferase (264 aa).

Residues 234–264 (ARDPESAHPQSSVLASAFSGPGSRVSGPEEI) form a disordered region.

This sequence belongs to the IspD/TarI cytidylyltransferase family. IspD subfamily.

It carries out the reaction 2-C-methyl-D-erythritol 4-phosphate + CTP + H(+) = 4-CDP-2-C-methyl-D-erythritol + diphosphate. It participates in isoprenoid biosynthesis; isopentenyl diphosphate biosynthesis via DXP pathway; isopentenyl diphosphate from 1-deoxy-D-xylulose 5-phosphate: step 2/6. Catalyzes the formation of 4-diphosphocytidyl-2-C-methyl-D-erythritol from CTP and 2-C-methyl-D-erythritol 4-phosphate (MEP). The protein is 2-C-methyl-D-erythritol 4-phosphate cytidylyltransferase of Xanthomonas euvesicatoria pv. vesicatoria (strain 85-10) (Xanthomonas campestris pv. vesicatoria).